The primary structure comprises 78 residues: Small ribosomal subunit protein bS18 (78 aa).

This sequence belongs to the bacterial ribosomal protein bS18 family. In terms of assembly, part of the 30S ribosomal subunit. Forms a tight heterodimer with protein bS6.

Its function is as follows. Binds as a heterodimer with protein bS6 to the central domain of the 16S rRNA, where it helps stabilize the platform of the 30S subunit. This chain is Small ribosomal subunit protein bS18, found in Limosilactobacillus fermentum (strain NBRC 3956 / LMG 18251) (Lactobacillus fermentum).